Here is a 259-residue protein sequence, read N- to C-terminus: Snake venom serine protease homolog rhinocerase 3 (259 aa).

A signal peptide spans Val-1–Ala-17. Positions Gln-18–Leu-23 are excised as a propeptide. One can recognise a Peptidase S1 domain in the interval Val-24–Ala-250. Disulfide bonds link Cys-30–Cys-164, Cys-51–Cys-67, Cys-99–Cys-257, Cys-143–Cys-211, Cys-175–Cys-190, and Cys-201–Cys-226. The N-linked (GlcNAc...) asparagine glycan is linked to Asn-80. A glycan (N-linked (GlcNAc...) asparagine) is linked at Asn-252.

This sequence belongs to the peptidase S1 family. Snake venom subfamily. Expressed by the venom gland.

Its subcellular location is the secreted. Snake venom serine protease homolog that may act in the hemostasis system of the prey. This is Snake venom serine protease homolog rhinocerase 3 from Bitis rhinoceros (West African gaboon viper).